Here is a 194-residue protein sequence, read N- to C-terminus: Large ribosomal subunit protein bL9 (194 aa).

Residues 167-194 form a disordered region; it reads EDRAAEAEAASDMAAGGAGSFEGDHYES.

This sequence belongs to the bacterial ribosomal protein bL9 family.

Functionally, binds to the 23S rRNA. This chain is Large ribosomal subunit protein bL9, found in Caulobacter sp. (strain K31).